Here is a 330-residue protein sequence, read N- to C-terminus: Tryptophan--tRNA ligase (330 aa).

ATP contacts are provided by residues 10–12 and 18–19; these read QTT and GN. The 'HIGH' region motif lies at 11 to 19; that stretch reads TTGALHLGN. Position 134 (Asp134) interacts with L-tryptophan. ATP-binding positions include 146–148, Ile186, and 195–199; these read GED and KMSKS. Positions 195 to 199 match the 'KMSKS' region motif; sequence KMSKS.

It belongs to the class-I aminoacyl-tRNA synthetase family. As to quaternary structure, homodimer.

It localises to the cytoplasm. The catalysed reaction is tRNA(Trp) + L-tryptophan + ATP = L-tryptophyl-tRNA(Trp) + AMP + diphosphate + H(+). Catalyzes the attachment of tryptophan to tRNA(Trp). The protein is Tryptophan--tRNA ligase of Rickettsia typhi (strain ATCC VR-144 / Wilmington).